The primary structure comprises 245 residues: Thiopurine S-methyltransferase (245 aa).

Position 29–40 (29–40 (WREKWVDGKIGF)) interacts with S-adenosyl-L-methionine. Phe-40 is a binding site for substrate. N6-acetyllysine is present on Lys-58. 3 residues coordinate S-adenosyl-L-methionine: Leu-69, Glu-90, and Arg-152.

It belongs to the class I-like SAM-binding methyltransferase superfamily. TPMT family. Monomer.

The protein resides in the cytoplasm. It catalyses the reaction S-adenosyl-L-methionine + a thiopurine = S-adenosyl-L-homocysteine + a thiopurine S-methylether.. The chain is Thiopurine S-methyltransferase (TPMT) from Lynx rufus (Bobcat).